Consider the following 477-residue polypeptide: MTPPLPGFRDVRVVVAGDLMLDRYWHGATQRISPEAPVPVVRVDGAEERPGGAANVALNVAALGGEAQVVGPTGSDEAADRLAELLEAAGVGQRFHRIAGADTITKLRVISRHQQLIRLDFERGFPGFDHAAMLALLEPALADAAVLVLSDYAKGALPDPAGLIEAARRAGRPVLVDPKGADYRRYRGASLLTPNLAEFEAVVGPCADGDEIAKRARQLAADLELEALLVTRGEAGMTLAPREGVAVHLPTRAREVFDVTGAGDTVIATLAAALGAGVDLADASALANVAAGVVVGKLGTATVTPAELEAALGGGPAPAAGSGVVDEPGLLAAVRQARAAGERIVMTNGCFDLLHAGHVDYLQRARRRGERLVVAVNDDASVARLKGAERPVTPLAQRMAVLAALDTVDWVVPFSEDTPARLIEAVLPDRLVKGGDYQPEQIAGHDVVVAAGGSVEVLPLLAGASTTDLIARIRSRG.

Residues 1–319 (MTPPLPGFRD…AALGGGPAPA (319 aa)) form a ribokinase region. Residue 195-198 (NLAE) coordinates ATP. Asp-264 is a catalytic residue. The tract at residues 346 to 477 (MTNGCFDLLH…DLIARIRSRG (132 aa)) is cytidylyltransferase.

It in the N-terminal section; belongs to the carbohydrate kinase PfkB family. The protein in the C-terminal section; belongs to the cytidylyltransferase family. Homodimer.

The catalysed reaction is D-glycero-beta-D-manno-heptose 7-phosphate + ATP = D-glycero-beta-D-manno-heptose 1,7-bisphosphate + ADP + H(+). It catalyses the reaction D-glycero-beta-D-manno-heptose 1-phosphate + ATP + H(+) = ADP-D-glycero-beta-D-manno-heptose + diphosphate. The protein operates within nucleotide-sugar biosynthesis; ADP-L-glycero-beta-D-manno-heptose biosynthesis; ADP-L-glycero-beta-D-manno-heptose from D-glycero-beta-D-manno-heptose 7-phosphate: step 1/4. It functions in the pathway nucleotide-sugar biosynthesis; ADP-L-glycero-beta-D-manno-heptose biosynthesis; ADP-L-glycero-beta-D-manno-heptose from D-glycero-beta-D-manno-heptose 7-phosphate: step 3/4. Functionally, catalyzes the phosphorylation of D-glycero-D-manno-heptose 7-phosphate at the C-1 position to selectively form D-glycero-beta-D-manno-heptose-1,7-bisphosphate. In terms of biological role, catalyzes the ADP transfer from ATP to D-glycero-beta-D-manno-heptose 1-phosphate, yielding ADP-D-glycero-beta-D-manno-heptose. The chain is Bifunctional protein HldE from Halorhodospira halophila (strain DSM 244 / SL1) (Ectothiorhodospira halophila (strain DSM 244 / SL1)).